Here is an 888-residue protein sequence, read N- to C-terminus: MAATAAERLFSLELLVDWVRLDSPCFASPAVAFRLLDFPPLLILPPAAPDPEPQRGAITFGRGKACLLRLRPAALRRPRLRAALLQLPAVPTPAPLLLGACDILLVPSVGQRGIFTLRGPEAERVGELALFYRLTDLGRFPPGAPQLRSPLSPACITGSEALEVSEPRTKETSKPCTKDTSARCLQCVSNGRFLEAPEPCAKDTDNWSAGDSDASAVQKSWEEAILHSKASSGDMASAPCSPAPSGRTVSPVSLEVTELDFETNTFCPPPLYYTHLTQEKAPSARVEITIEPQRNEPEDLEDAFPETKPVGPTIRPVKHTRAAIQESPPVLLNLPQMQGPGEANEAPCPPQTEQSTVGAIRQLPLLNALLMELSLLCNQPVANPSQVHPHLAWLYRGEHKGPDPSTKSTSRSESKSNKLSAQENEKLVSPQSTKNPKGKHSKISGSPPPKVTKGRLLYGLTNTLRLRLQQTNPGMLVVHEKREQYRRSQIRAVGPKFRIPSWKGKVSSLAAESQMPPQLPGDTLTDSNGKVSSWAVQSQLPPQLPRDRSLDSYGSFAEGSDTSMLISSGFDESSRTREAKQSHAMKKETVGQSENKTVTSLRAPVSPAVSVIPERSPRSNILRGKWKKQVQSPGLSRQDPAVDKAVGEGIDGKQVKAASAADTNENRPPSRKSSCESTSELQCWDGSTSPCYSEDFCTTENNSRSLPAPDSSTGAEYAQKGSWASKSSEARLSTRKNSSESSSVFTPPFSAGSPVCSQKRSRVLKTHDSLEEASSLSTSDFSSQWTNEKENQADPGSSKIRRRQDRSTKLKVGTGHKSSEKSHSARTSQVSSYEPSNLSELELKAIDDIDSASTGFQEEEDGLGSLRISRQCRDICELVINKLPGYTV.

Disordered regions lie at residues 398 to 454, 508 to 602, 620 to 642, 654 to 683, and 699 to 836; these read EHKG…VTKG, SLAA…TSLR, NILR…DPAV, QVKA…ELQC, and TENN…YEPS. Positions 524–541 are enriched in polar residues; that stretch reads LTDSNGKVSSWAVQSQLP. The span at 572 to 589 shows a compositional bias: basic and acidic residues; the sequence is ESSRTREAKQSHAMKKET. The segment covering 590-600 has biased composition (polar residues); sequence VGQSENKTVTS. Polar residues-rich tracts occupy residues 661–683, 699–714, 722–745, 772–786, and 825–836; these read ADTN…ELQC, TENN…SSTG, SWAS…SSVF, EASS…SQWT, and ARTSQVSSYEPS.

Interacts (via middle region) with microtubules.

It is found in the cytoplasm. The protein localises to the cytoskeleton. The protein resides in the spindle pole. Its subcellular location is the microtubule organizing center. It localises to the centrosome. It is found in the midbody. Functionally, microtubule-associated protein (MAP) that plays a role in the regulation of cell division; promotes microtubule stability and participates in the organization of the spindle midzone and normal progress of cytokinesis. The polypeptide is Microtubule-associated protein 10 (Map10) (Rattus norvegicus (Rat)).